The primary structure comprises 631 residues: Glutamyl-tRNA(Gln) amidotransferase subunit E (631 aa).

The protein belongs to the GatB/GatE family. GatE subfamily. In terms of assembly, heterodimer of GatD and GatE.

It carries out the reaction L-glutamyl-tRNA(Gln) + L-glutamine + ATP + H2O = L-glutaminyl-tRNA(Gln) + L-glutamate + ADP + phosphate + H(+). In terms of biological role, allows the formation of correctly charged Gln-tRNA(Gln) through the transamidation of misacylated Glu-tRNA(Gln) in organisms which lack glutaminyl-tRNA synthetase. The reaction takes place in the presence of glutamine and ATP through an activated gamma-phospho-Glu-tRNA(Gln). The GatDE system is specific for glutamate and does not act on aspartate. The protein is Glutamyl-tRNA(Gln) amidotransferase subunit E of Methanococcus maripaludis (strain C7 / ATCC BAA-1331).